The chain runs to 216 residues: Chaperone protein TorD (216 aa).

The protein belongs to the TorD/DmsD family. TorD subfamily.

The protein localises to the cytoplasm. Functionally, involved in the biogenesis of TorA. Acts on TorA before the insertion of the molybdenum cofactor and, as a result, probably favors a conformation of the apoenzyme that is competent for acquiring the cofactor. In Ferrimonas balearica (strain DSM 9799 / CCM 4581 / KCTC 23876 / PAT), this protein is Chaperone protein TorD.